The following is a 163-amino-acid chain: UPF0763 protein JJD26997_0796 (163 aa).

Belongs to the UPF0763 family.

The sequence is that of UPF0763 protein JJD26997_0796 from Campylobacter jejuni subsp. doylei (strain ATCC BAA-1458 / RM4099 / 269.97).